We begin with the raw amino-acid sequence, 877 residues long: Oligopeptide transporter 2 (877 aa).

The Cytoplasmic portion of the chain corresponds to 1–167 (MSETVKDKVI…DPTIPVETFR (167 aa)). The chain crosses the membrane as a helical span at residues 168–188 (AYFLAIIWSVIGSGFNEFFSH). Residue R189 is a topological domain, extracellular. A helical transmembrane segment spans residues 190–210 (VVSISLNTPIIQMFLYICGKA). Residues 211–240 (WAKTIPCWTITIRGRKYGINIDKPWTQKEQ) lie on the Cytoplasmic side of the membrane. A helical transmembrane segment spans residues 241 to 261 (MFSTLLYAICQGAFYTHYNIL). Over 262–272 (TQKLFYHSAFS) the chain is Extracellular. A helical transmembrane segment spans residues 273–293 (FGYQFLLSLSVQFIGFGFAGI). The Cytoplasmic segment spans residues 294–334 (LRKFVVYPARALWPTVMPTIAINKALLGKEKHESGMSRYKF). The chain crosses the membrane as a helical span at residues 335-355 (FFLTFFIMFIYNWFPTYIINI). The Extracellular portion of the chain corresponds to 356 to 374 (LNTFNWMTWIKPSNINLAN). N374 carries an N-linked (GlcNAc...) asparagine glycan. The helical transmembrane segment at 375–395 (ITGGVTGLGINPISSFDWNVI) threads the bilayer. Residues 396-404 (SFNSPLVYP) lie on the Cytoplasmic side of the membrane. The chain crosses the membrane as a helical span at residues 405–425 (FWSYLTQYLGCILAALIVIAV). The Extracellular segment spans residues 426 to 480 (YYSNYMSCQYLPIFTNSLYTNTGHSFKVTEVLDSDNKLDVKKYQSYSPPYYSAGN). A helical membrane pass occupies residues 481–501 (LVSYGAFICAYPLMITWSFIV). Residues 502-553 (HSKLLFNAFKDWALNLWAMRKLKSWVTMFKSDYRALDDYDDPHSNAMKNYKE) are Cytoplasmic-facing. The chain crosses the membrane as a helical span at residues 554–574 (VPDWWYFAILIGSLVVGIAVV). The Extracellular segment spans residues 575–582 (EHYPTNTP). The helical transmembrane segment at 583 to 603 (VWGLFVCLGFNFVFLIPTTIL) threads the bilayer. The Cytoplasmic segment spans residues 604–614 (QATTGYSFGLN). Residues 615–635 (LLIEMVMGYALPGNPIAIMIL) traverse the membrane as a helical segment. At 636–671 (KAFGYNIDGQADNYVSNLKIAHYCKIPPMALFRGQC) the chain is on the extracellular side. The helical transmembrane segment at 672 to 692 (VIVFIQIFVNLGVLNWQISNI) threads the bilayer. Over 693–730 (KDFCTPHQNAKFTCPDAVTYYNASVVWGAIGPKRIFNY) the chain is Cytoplasmic. The helical transmembrane segment at 731–751 (IYPIFKWCWLIGACIGIFFGV) threads the bilayer. At 752 to 766 (WKRWGKFYPRYFDPM) the chain is on the extracellular side. A helical transmembrane segment spans residues 767-789 (LFVGGMLNMSPPYNLMYYTSGMI). At 790 to 811 (VSYISQYYMKRHHLNLWEKYNY) the chain is on the cytoplasmic side. Residues 812–832 (VLSAGFSTGLVLSAIIIFFAV) form a helical membrane-spanning segment. The Extracellular segment spans residues 833–877 (QYKDTAFNWWGNTVPYAGADGVGYPLKNITDTANGYFGYAPGHYP). An N-linked (GlcNAc...) asparagine glycan is attached at N860.

This sequence belongs to the oligopeptide OPT transporter family.

It is found in the membrane. Its function is as follows. Transports tetra- and pentapeptides. Does not transport glutathione. The polypeptide is Oligopeptide transporter 2 (OPT2) (Saccharomyces cerevisiae (strain ATCC 204508 / S288c) (Baker's yeast)).